Here is a 244-residue protein sequence, read N- to C-terminus: uncharacterized protein (244 aa).

Basic residues predominate over residues 1 to 11 (MSRRSRSRSRS). Disordered regions lie at residues 1 to 104 (MSRR…TLNE) and 213 to 244 (ARQK…KFGK). Positions 12–31 (PKRDREERKRREDRDRDRER) are enriched in basic and acidic residues. Over residues 32–46 (KRDRKDRERKRRHRS) the composition is skewed to basic residues. Positions 63-75 (FREERRRRERNES) are enriched in basic and acidic residues. A compositionally biased stretch (pro residues) spans 77 to 89 (KLPPPPPPPPSDP). Residues 213 to 223 (ARQKSDMKKNE) are compositionally biased toward basic and acidic residues. Over residues 224-234 (QQAILNKSGNS) the composition is skewed to polar residues.

This is an uncharacterized protein from Caenorhabditis elegans.